A 1214-amino-acid polypeptide reads, in one-letter code: Protein charlatan (1214 aa).

Disordered stretches follow at residues 1–20 (MATL…QSSN), 213–238 (HVNQ…RQEH), and 250–284 (SANA…GGRK). Positions 258–276 (AQSTPTSAPSNSSGGSTSS) are enriched in low complexity. 2 consecutive C2H2-type zinc fingers follow at residues 305-327 (YACT…ENIH) and 333-356 (FQCY…LRMH). Disordered regions lie at residues 367–397 (RRHV…NVTI) and 463–488 (PVAS…SGLL). Over residues 473 to 485 (GSHGGNGNGGSGS) the composition is skewed to gly residues. C2H2-type zinc fingers lie at residues 496–518 (FTCC…LNTH) and 522–545 (FVCL…LKVH). Disordered stretches follow at residues 741–790 (SASS…ATSP), 848–946 (NDED…SGPS), and 1062–1084 (LSTP…SNAS). Composition is skewed to low complexity over residues 855 to 871 (QQHQ…QQQQ), 885 to 896 (NNNNNNNSNNNN), 923 to 946 (SPGT…SGPS), and 1071 to 1084 (KAAP…SNAS).

As to expression, expressed in the PNS and CNS. In early blastoderm stages, it is ubiquitously expressed, then, before stage 5, it disappears from the poles of the embryo and faint stripes are visible. At stage 5, it also accumulates in the dorsal region, cephalic furrow ectodermal patches between the tracheal pits, where neurons of the PNS appear. In older embryos (stage 15) a strong expression is mostly restricted to the central nervous system (CNS) and PNS. In PNS, the pattern suggests that expression occur in many of the neurons of the ventral, lateral and dorsal clusters of neurons. In third instar wing disks, it is expressed in rows of cells on either side of the prospective anterior wing margin and in groups of cells that coincide with proneural clusters of ac/sc expression. Also expressed independently of ac/sc in certain areas of the disk, such as the postnotum and posterior dorsal proximal wing. Expressed in the proneural clusters of the leg disks and in the eye/antenna disk.

The protein localises to the nucleus. Its function is as follows. Probable transcription factor involved in the development of the adult pattern of macrochaetae. Required for accumulation of achaete (ac) and scute (sc) in proneural clusters. Probably acts by binding to the proneural cluster-specific enhancers of the ac/sc complex and increasing enhancer efficiency, thereby acting as a stimulator of ac/sc expression in proneural clusters. Also required for correct development of the embryonic/larval peripheral nervous system (PNS). The polypeptide is Protein charlatan (chn) (Drosophila melanogaster (Fruit fly)).